Reading from the N-terminus, the 517-residue chain is Steroid 17-alpha-hydroxylase/17,20 lyase (517 aa).

Cys451 provides a ligand contact to heme.

It belongs to the cytochrome P450 family. The cofactor is heme.

It is found in the membrane. It carries out the reaction a C21-steroid + reduced [NADPH--hemoprotein reductase] + O2 = a 17alpha-hydroxy-C21-steroid + oxidized [NADPH--hemoprotein reductase] + H2O + H(+). The catalysed reaction is 17alpha-hydroxyprogesterone + reduced [NADPH--hemoprotein reductase] + O2 = androst-4-ene-3,17-dione + acetate + oxidized [NADPH--hemoprotein reductase] + H2O + 2 H(+). It catalyses the reaction 17alpha-hydroxypregnenolone + reduced [NADPH--hemoprotein reductase] + O2 = 3beta-hydroxyandrost-5-en-17-one + acetate + oxidized [NADPH--hemoprotein reductase] + H2O + 2 H(+). It participates in lipid metabolism; steroid biosynthesis. Conversion of pregnenolone and progesterone to their 17-alpha-hydroxylated products and subsequently to dehydroepiandrosterone (DHEA) and androstenedione. Catalyzes both the 17-alpha-hydroxylation and the 17,20-lyase reaction. The chain is Steroid 17-alpha-hydroxylase/17,20 lyase (cyp17a1) from Oryzias latipes (Japanese rice fish).